A 458-amino-acid polypeptide reads, in one-letter code: Tol-Pal system protein TolB (458 aa).

Positions Met-1 to Ala-23 are cleaved as a signal peptide.

The protein belongs to the TolB family. As to quaternary structure, the Tol-Pal system is composed of five core proteins: the inner membrane proteins TolA, TolQ and TolR, the periplasmic protein TolB and the outer membrane protein Pal. They form a network linking the inner and outer membranes and the peptidoglycan layer.

The protein resides in the periplasm. Functionally, part of the Tol-Pal system, which plays a role in outer membrane invagination during cell division and is important for maintaining outer membrane integrity. The chain is Tol-Pal system protein TolB from Zymomonas mobilis subsp. mobilis (strain ATCC 31821 / ZM4 / CP4).